The sequence spans 226 residues: 2-C-methyl-D-erythritol 4-phosphate cytidylyltransferase (226 aa).

Belongs to the IspD/TarI cytidylyltransferase family. IspD subfamily.

The enzyme catalyses 2-C-methyl-D-erythritol 4-phosphate + CTP + H(+) = 4-CDP-2-C-methyl-D-erythritol + diphosphate. The protein operates within isoprenoid biosynthesis; isopentenyl diphosphate biosynthesis via DXP pathway; isopentenyl diphosphate from 1-deoxy-D-xylulose 5-phosphate: step 2/6. Catalyzes the formation of 4-diphosphocytidyl-2-C-methyl-D-erythritol from CTP and 2-C-methyl-D-erythritol 4-phosphate (MEP). The sequence is that of 2-C-methyl-D-erythritol 4-phosphate cytidylyltransferase from Trichodesmium erythraeum (strain IMS101).